The sequence spans 248 residues: Pyridoxine 5'-phosphate synthase (248 aa).

Asparagine 12 is a binding site for 3-amino-2-oxopropyl phosphate. 14–15 (DH) lines the 1-deoxy-D-xylulose 5-phosphate pocket. Arginine 23 contacts 3-amino-2-oxopropyl phosphate. Histidine 48 acts as the Proton acceptor in catalysis. Residues arginine 50 and histidine 55 each coordinate 1-deoxy-D-xylulose 5-phosphate. Catalysis depends on glutamate 75, which acts as the Proton acceptor. Threonine 105 is a 1-deoxy-D-xylulose 5-phosphate binding site. Histidine 196 (proton donor) is an active-site residue. 3-amino-2-oxopropyl phosphate contacts are provided by residues glycine 197 and 218-219 (GH).

This sequence belongs to the PNP synthase family. Homooctamer; tetramer of dimers.

The protein resides in the cytoplasm. It catalyses the reaction 3-amino-2-oxopropyl phosphate + 1-deoxy-D-xylulose 5-phosphate = pyridoxine 5'-phosphate + phosphate + 2 H2O + H(+). Its pathway is cofactor biosynthesis; pyridoxine 5'-phosphate biosynthesis; pyridoxine 5'-phosphate from D-erythrose 4-phosphate: step 5/5. In terms of biological role, catalyzes the complicated ring closure reaction between the two acyclic compounds 1-deoxy-D-xylulose-5-phosphate (DXP) and 3-amino-2-oxopropyl phosphate (1-amino-acetone-3-phosphate or AAP) to form pyridoxine 5'-phosphate (PNP) and inorganic phosphate. The polypeptide is Pyridoxine 5'-phosphate synthase (Stutzerimonas stutzeri (strain A1501) (Pseudomonas stutzeri)).